We begin with the raw amino-acid sequence, 126 residues long: Large ribosomal subunit protein bL12 (126 aa).

It belongs to the bacterial ribosomal protein bL12 family. As to quaternary structure, homodimer. Part of the ribosomal stalk of the 50S ribosomal subunit. Forms a multimeric L10(L12)X complex, where L10 forms an elongated spine to which 2 to 4 L12 dimers bind in a sequential fashion. Binds GTP-bound translation factors.

Its function is as follows. Forms part of the ribosomal stalk which helps the ribosome interact with GTP-bound translation factors. Is thus essential for accurate translation. In Elusimicrobium minutum (strain Pei191), this protein is Large ribosomal subunit protein bL12.